Reading from the N-terminus, the 441-residue chain is Serine carboxypeptidase-like 1 (441 aa).

The N-terminal stretch at 1–29 (MANKYVSSVLKSLLVLLHLVFLSKQHVDS) is a signal peptide. 3 cysteine pairs are disulfide-bonded: Cys88–Cys331, Cys252–Cys266, and Cys290–Cys297. Asn109 carries an N-linked (GlcNAc...) asparagine glycan. Ser184 is a catalytic residue. Asn350 carries N-linked (GlcNAc...) asparagine glycosylation. Asp366 is a catalytic residue. Asn382 carries an N-linked (GlcNAc...) asparagine glycan. Residue His419 is part of the active site.

The protein belongs to the peptidase S10 family. In terms of tissue distribution, expressed in seedlings and roots.

The protein resides in the secreted. In terms of biological role, probable carboxypeptidase. In Arabidopsis thaliana (Mouse-ear cress), this protein is Serine carboxypeptidase-like 1 (SCPL1).